The chain runs to 800 residues: Structural protein ORF800 (800 aa).

Coiled coils occupy residues 98-130 (AENI…YNLA), 447-475 (LLAE…ANNL), 514-567 (AINQ…ANNL), and 606-633 (AINQ…NLLA). Residues 759-800 (AESIAESESETTESENNETTESTANSEGEKQEGEHGARLIRV) form a disordered region. Positions 761–776 (SIAESESETTESENNE) are enriched in acidic residues. A compositionally biased stretch (basic and acidic residues) spans 785-800 (EGEKQEGEHGARLIRV).

It localises to the virion. The protein is Structural protein ORF800 of Acidianus convivator (ATV).